The primary structure comprises 1482 residues: Lysine-specific demethylase rbr-2 (1482 aa).

A disordered region spans residues 1 to 45 (MRGRRQEDIATTSSAPSTSTSHKKKTVSSNGSFRPRTQSNPGGKM). Low complexity predominate over residues 11 to 20 (TTSSAPSTST). Residues 30 to 41 (NGSFRPRTQSNP) are compositionally biased toward polar residues. Residues 61–102 (APVYYPTSEEFADPIEYVAKIRPDAERYGVVKIVPPSDFKPP) enclose the JmjN domain. The region spanning 126–223 (VKEKHTFIER…HIEPFNRNLK (98 aa)) is the ARID domain. Positions 244–316 (YQHHHGTMRS…SKTEEDEEEN (73 aa)) are disordered. Residues 251–264 (MRSEPENTDGKNTE) show a composition bias toward basic and acidic residues. Residues 277-288 (GRRRSKNKKPVP) are compositionally biased toward basic residues. The PHD-type 1 zinc-finger motif lies at 322-374 (QVYCVSCNEGKDEDLLLLCDIEGCNSGRHTYCCDPVLDEVPEGEWRCPKCIES). Positions 471–637 (QYANHAWNLN…KGRECVQSYS (167 aa)) constitute a JmjC domain. Fe cation is bound by residues histidine 517, aspartate 520, and histidine 605. The PHD-type 2 zinc-finger motif lies at 1206-1260 (LEGCCCLGGNKSDSSESVLSCIMCESQFHVRCCEWSTFFQHLPKGCFMCVRCLRG). The interval 1361 to 1403 (QQRPVKSKPSASLFDPKLNSKRKRPNPSQKDSSKSKSRKRQGQ) is disordered. A PHD-type 3 zinc finger spans residues 1416–1471 (FKSCQARSCLKPFGDSVNWVMCDAGCKNWFHVICVGFTLREINDMHEYRCSSCLDH).

This sequence belongs to the JARID1 histone demethylase family. Fe(2+) is required as a cofactor.

Its subcellular location is the nucleus. The enzyme catalyses N(6),N(6),N(6)-trimethyl-L-lysyl(4)-[histone H3] + 3 2-oxoglutarate + 3 O2 = L-lysyl(4)-[histone H3] + 3 formaldehyde + 3 succinate + 3 CO2. Histone demethylase that specifically demethylates 'Lys-4' of histone H3, thereby playing a central role in histone code. Does not demethylate histone H3 'Lys-9', H3 'Lys-27', H3 'Lys-36', H3 'Lys-79' or H4 'Lys-20'. Demethylates trimethylated and dimethylated but not monomethylated H3 'Lys-4'. Involved in larval development and vulva formation. This Caenorhabditis briggsae protein is Lysine-specific demethylase rbr-2 (rbr-2).